The primary structure comprises 1020 residues: Non-canonical nonribosomal peptide synthetase hkm10 (1020 aa).

Positions 21-419 (QMLEDPDAIA…GRFDHQVKIR (399 aa)) are adenylation (A) domain. A Carrier domain is found at 526 to 608 (QDKVPSEGAS…QLAHIVDRNQ (83 aa)). Ser-568 carries the O-(pantetheine 4'-phosphoryl)serine modification. The interval 652–894 (LTGATGFVGA…FVPIDYVTST (243 aa)) is short-chain dehydrogenase/reductase (R) domain.

Belongs to the NRP synthetase family.

Its pathway is secondary metabolite biosynthesis. Non-canonical nonribosomal peptide synthetase; part of the gene cluster that mediates the biosynthesis of hancockiamides, an unusual new family of N-cinnamoylated piperazines. The NRPS hkm10 and the NmrA-like reductase hkm9 are proposed to convert two molecules of L-Phe to the intermediary piperazine called xenocockiamide A. Xenocockiamide A is then converted to hancockiamide D via a series of hydroxylations and O-methylations. The tyrosinase hkm6 may catalyze an aromatic hydroxylation, then the 2-oxoglutarate-dependent Fe(II) dioxygenase hkm4 and the FAD-dependent phenol hydroxylase hkm7 may catalyze consecutive hydroxylations to install 2 more hydroxy groups, and the methyltransferase hkm8 probably catalyzes two methylations using 2 molecules of S-adenosyl-L-methionine (SAM). The NRPS hkm11 activates and transfers trans-cinnamate supplied by the PAL hkm12 to hancockiamide D and produces hancockiamide A. NRPS Hkm11 has the flexibility to tolerate the bulky hancockiamide G as a substrate and the absence of the acetyl-transferase hkm3 opens up the opportunity for hkm11 to introduce a second N-cinnamoyl moiety. The cytochrome P450 monooxygenase hkm5 catalyzes the methylenedioxy bridge formation, converting hancockiamide A into hancockiamide G. Hkm5 can also convert hancockiamide B into hancockiamide C, and hancockiamide D into hancockiamide H. The N-acetyltransferase hkm3 finally transfers an acetyl group to 1-N of piperazine, converting hancockiamide A into hancockiamide B and hancockiamide G into hancockiamide C. In Aspergillus hancockii, this protein is Non-canonical nonribosomal peptide synthetase hkm10.